A 475-amino-acid polypeptide reads, in one-letter code: Ras-GEF domain-containing family member 1A (475 aa).

The region spanning 33 to 164 (QDGSLVSGSL…SISQMTQNVL (132 aa)) is the N-terminal Ras-GEF domain. In terms of domain architecture, Ras-GEF spans 208-455 (DPLILAQQLT…FLASFENEGP (248 aa)).

Guanine nucleotide exchange factor (GEF) with specificity for rap2a and other Ras family proteins (in vitro). Plays a role in cell migration. This Xenopus tropicalis (Western clawed frog) protein is Ras-GEF domain-containing family member 1A (rasgef1a).